The chain runs to 348 residues: Rhodopsin (348 aa).

An N-acetylmethionine modification is found at methionine 1. Residues 1–36 (MNGTEGPNFYVPFSNATGVVRSPFEYPQYYLAEPWQ) lie on the Extracellular side of the membrane. N-linked (GlcNAc...) asparagine glycans are attached at residues asparagine 2 and asparagine 15. The chain crosses the membrane as a helical span at residues 37-61 (FSMLAAYMFLLIVLGFPINFLTLYV). Residues 62–73 (TVQHKKLRTPLN) are Cytoplasmic-facing. The helical transmembrane segment at 74 to 96 (YILLNLAVADLFMVFGGFTTTLY) threads the bilayer. At 97-110 (TSLHGYFVFGPTGC) the chain is on the extracellular side. Cysteine 110 and cysteine 187 form a disulfide bridge. A helical membrane pass occupies residues 111–133 (NAEGFFATLGGEIALWSLVVLAI). Residues 134-136 (ERY) carry the 'Ionic lock' involved in activated form stabilization motif. Residues 134–152 (ERYVVVCKPMSNFRFGENH) lie on the Cytoplasmic side of the membrane. The helical transmembrane segment at 153–173 (AIMGVAFTWVMALACAAPPLF) threads the bilayer. The Extracellular portion of the chain corresponds to 174-202 (GWSRYIPEGLQCSCGIDYYTLKPEVNNES). Residue glutamate 201 coordinates Zn(2+). Residues 203 to 224 (FVIYMFVVHFTIPMIVIFFCYG) form a helical membrane-spanning segment. Residues 225–252 (QLVFTVKEARAQQQESATTQKAEKEVTR) lie on the Cytoplasmic side of the membrane. A helical transmembrane segment spans residues 253–274 (MVIIMVIAFLICWVPYASVAFY). At 275 to 286 (IFTHQGSNFGPI) the chain is on the extracellular side. Residue glutamine 279 coordinates Zn(2+). A helical transmembrane segment spans residues 287 to 308 (FMTIPAFFAKSASIYNPVIYIM). Lysine 296 carries the N6-(retinylidene)lysine modification. The Cytoplasmic portion of the chain corresponds to 309-348 (MNKQFRNCMLTTICCGKNPLGDDEASATVSKTETSQVAPA). Residues cysteine 322 and cysteine 323 are each lipidated (S-palmitoyl cysteine). Positions 330-348 (DDEASATVSKTETSQVAPA) are interaction with SAG. Residue serine 334 is modified to Phosphoserine. Threonine 336 carries the phosphothreonine modification. Position 338 is a phosphoserine (serine 338). Residues threonine 340 and threonine 342 each carry the phosphothreonine modification. Serine 343 bears the Phosphoserine mark.

Belongs to the G-protein coupled receptor 1 family. Opsin subfamily. Homodimer. May form a complex composed of RHO, GRK1 and RCVRN in a Ca(2+)-dependent manner; RCVRN prevents the interaction between GRK1 and RHO. Interacts with GRK1. Interacts (phosphorylated form) with SAG. Interacts with GNAT1. Interacts with GNAT3. SAG and G-proteins compete for a common binding site. Interacts with PRCD; the interaction promotes PRCD stability. Forms a complex with ASAP1 and ARF4. Forms a complex with ASAP1, RAB11A, Rabin8/RAB3IP, ARF4 and RAB11FIP3; the complex regulates Golgi-to-cilia rhodopsin/RHO transport in photoreceptors. Phosphorylated on some or all of the serine and threonine residues present in the C-terminal region. In terms of processing, contains one covalently linked retinal chromophore. Upon light absorption, the covalently bound 11-cis-retinal is converted to all-trans-retinal. After hydrolysis of the Schiff base and release of the covalently bound all-trans-retinal, active rhodopsin is regenerated by binding of a fresh molecule of 11-cis-retinal.

It is found in the membrane. Its subcellular location is the cell projection. The protein resides in the cilium. The protein localises to the photoreceptor outer segment. Photoreceptor required for image-forming vision at low light intensity. Required for photoreceptor cell viability after birth. Light-induced isomerization of 11-cis to all-trans retinal triggers a conformational change that activates signaling via G-proteins. Subsequent receptor phosphorylation mediates displacement of the bound G-protein alpha subunit by the arrestin SAG and terminates signaling. The polypeptide is Rhodopsin (RHO) (Macaca fascicularis (Crab-eating macaque)).